We begin with the raw amino-acid sequence, 243 residues long: Protein S40-7 (243 aa).

Disordered stretches follow at residues 1 to 68 (MNKN…KSGL) and 107 to 143 (SSTASSSSSSGGGASAGSSSSARAIPTAPKPPQERLP). The segment covering 10 to 20 (SSPSSLATISD) has biased composition (polar residues). The segment covering 22 to 32 (ADGELNEDDIF) has biased composition (acidic residues). Positions 47 to 67 (PVSSPAKQQTPARQLQRSKSG) are enriched in polar residues.

This sequence belongs to the senescence regulator S40 family.

Its subcellular location is the cytoplasm. This is Protein S40-7 from Arabidopsis thaliana (Mouse-ear cress).